Reading from the N-terminus, the 225-residue chain is Enolase-phosphatase E1 (225 aa).

This sequence belongs to the HAD-like hydrolase superfamily. MasA/MtnC family. In terms of assembly, monomer. Mg(2+) is required as a cofactor.

It catalyses the reaction 5-methylsulfanyl-2,3-dioxopentyl phosphate + H2O = 1,2-dihydroxy-5-(methylsulfanyl)pent-1-en-3-one + phosphate. The protein operates within amino-acid biosynthesis; L-methionine biosynthesis via salvage pathway; L-methionine from S-methyl-5-thio-alpha-D-ribose 1-phosphate: step 3/6. It participates in amino-acid biosynthesis; L-methionine biosynthesis via salvage pathway; L-methionine from S-methyl-5-thio-alpha-D-ribose 1-phosphate: step 4/6. Its function is as follows. Bifunctional enzyme that catalyzes the enolization of 2,3-diketo-5-methylthiopentyl-1-phosphate (DK-MTP-1-P) into the intermediate 2-hydroxy-3-keto-5-methylthiopentenyl-1-phosphate (HK-MTPenyl-1-P), which is then dephosphorylated to form the acireductone 1,2-dihydroxy-3-keto-5-methylthiopentene (DHK-MTPene). This Shewanella halifaxensis (strain HAW-EB4) protein is Enolase-phosphatase E1.